A 197-amino-acid polypeptide reads, in one-letter code: RNA pyrophosphohydrolase (197 aa).

The region spanning 6 to 149 is the Nudix hydrolase domain; the sequence is GYRPNVGIVI…KRDVYRKAMK (144 aa). The short motif at 38-59 is the Nudix box element; that stretch reads GGINDGETPEQAMYRELYEEVG. The tract at residues 165 to 197 is disordered; the sequence is LSTNNNDEKKANYSAKKPYSPYRNQDKKRKTRV.

This sequence belongs to the Nudix hydrolase family. RppH subfamily. It depends on a divalent metal cation as a cofactor.

In terms of biological role, accelerates the degradation of transcripts by removing pyrophosphate from the 5'-end of triphosphorylated RNA, leading to a more labile monophosphorylated state that can stimulate subsequent ribonuclease cleavage. The protein is RNA pyrophosphohydrolase of Mannheimia succiniciproducens (strain KCTC 0769BP / MBEL55E).